A 576-amino-acid chain; its full sequence is uncharacterized protein (576 aa).

Topologically, residues 1 to 8 (MSLSLGAA) are cytoplasmic. Residues 9 to 29 (IYIALKPIFKIYTIMLVGYLV) traverse the membrane as a helical segment. Over 30-45 (AKFDIVSMENAKGISN) the chain is Extracellular. The chain crosses the membrane as a helical span at residues 46-66 (MVVNAILPCLTFNKIVSNISW). At 67–71 (RDIKE) the chain is on the cytoplasmic side. The chain crosses the membrane as a helical span at residues 72-92 (IGVIILSAFILFVLGATGALF). Residues 93 to 103 (TTFATTVPKKF) lie on the Extracellular side of the membrane. The helical transmembrane segment at 104 to 124 (FWGLIFAGFFPNISDLPIAYI) threads the bilayer. Residues 125-141 (QSMGNGSIFTAEEADKG) are Cytoplasmic-facing. The chain crosses the membrane as a helical span at residues 142-162 (VAYSCIFLFIQSFLMMNFGMW). Over 163-400 (RVVGLDFRDT…FIINCLRPAS (238 aa)) the chain is Extracellular. A helical membrane pass occupies residues 401–421 (LGAILGIICALIPWVKACFVT). The Cytoplasmic portion of the chain corresponds to 422–437 (TYVHVHKAPDGEPVLN). Residues 438–458 (FLMDFTEYIGNACVPLGLLLL) form a helical membrane-spanning segment. The Extracellular portion of the chain corresponds to 459–476 (GGTLARLEIKSLPPGFIK). Residues 477-497 (SALLMTCFRLIVIPIIGVLWV) form a helical membrane-spanning segment. The Cytoplasmic segment spans residues 498–512 (NKLYSIDWLDTGIGK). Residues 513-533 (FDMILTWSMPSATAQVYFTAF) form a helical membrane-spanning segment. The Extracellular segment spans residues 534-545 (YTPACGDHIQMN). The helical transmembrane segment at 546-566 (CLSVLFVMQYAILFITVAFVV) threads the bilayer. The Cytoplasmic segment spans residues 567-576 (TYTLKVDLKV).

It belongs to the auxin efflux carrier (TC 2.A.69) family.

It localises to the membrane. This is an uncharacterized protein from Saccharomyces cerevisiae (strain ATCC 204508 / S288c) (Baker's yeast).